We begin with the raw amino-acid sequence, 683 residues long: UvrABC system protein B (683 aa).

One can recognise a Helicase ATP-binding domain in the interval 31–414 (AGFEKGYKEQ…ELERTDHKVE (384 aa)). 44-51 (GATGTGKT) provides a ligand contact to ATP. The Beta-hairpin motif lies at 97–120 (YYDYYQPEAYVPQSDTYIEKDSAI). The 167-residue stretch at 435–601 (QIDDLVGEIN…TIIKPVHDVI (167 aa)) folds into the Helicase C-terminal domain. The UVR domain occupies 632–667 (KTMIKNLQEQMKEAAKKLDFEEAANLRDAIMELQSS). Positions 662–683 (MELQSSSRRPKTRKGKALNGKR) are disordered. Residues 669–683 (RRPKTRKGKALNGKR) show a composition bias toward basic residues.

The protein belongs to the UvrB family. Forms a heterotetramer with UvrA during the search for lesions. Interacts with UvrC in an incision complex.

The protein resides in the cytoplasm. The UvrABC repair system catalyzes the recognition and processing of DNA lesions. A damage recognition complex composed of 2 UvrA and 2 UvrB subunits scans DNA for abnormalities. Upon binding of the UvrA(2)B(2) complex to a putative damaged site, the DNA wraps around one UvrB monomer. DNA wrap is dependent on ATP binding by UvrB and probably causes local melting of the DNA helix, facilitating insertion of UvrB beta-hairpin between the DNA strands. Then UvrB probes one DNA strand for the presence of a lesion. If a lesion is found the UvrA subunits dissociate and the UvrB-DNA preincision complex is formed. This complex is subsequently bound by UvrC and the second UvrB is released. If no lesion is found, the DNA wraps around the other UvrB subunit that will check the other stand for damage. In Lactobacillus acidophilus (strain ATCC 700396 / NCK56 / N2 / NCFM), this protein is UvrABC system protein B.